A 447-amino-acid polypeptide reads, in one-letter code: Putative short-chain fatty acid transporter (447 aa).

Transmembrane regions (helical) follow at residues 17–37 (LPDP…CAWG), 49–69 (MWGN…LIVV), 98–118 (VVLV…FGLV), 136–156 (YALL…GFSG), 188–208 (TLFS…LPFI), 252–272 (FLAY…FYKN), 284–304 (IFLI…RAII), 321–341 (AGVQ…EFFI), 359–379 (FINF…PFVI), 402–422 (WMNM…GLGV), and 427–447 (GFCM…LYFL).

Its subcellular location is the cell inner membrane. Functionally, may be responsible for the uptake of short-chain fatty acids. The polypeptide is Putative short-chain fatty acid transporter (atoE) (Haemophilus influenzae (strain ATCC 51907 / DSM 11121 / KW20 / Rd)).